We begin with the raw amino-acid sequence, 196 residues long: Cell division protein SepF (196 aa).

Residues 16-81 (EDDEEFNEPA…KRAGSTFTKP (66 aa)) form a disordered region. Residues 56 to 69 (RPAQSTSKAQTQTA) are compositionally biased toward polar residues.

It belongs to the SepF family. Homodimer. Interacts with FtsZ.

It localises to the cytoplasm. Functionally, cell division protein that is part of the divisome complex and is recruited early to the Z-ring. Probably stimulates Z-ring formation, perhaps through the cross-linking of FtsZ protofilaments. Its function overlaps with FtsA. In Lactococcus lactis subsp. lactis (strain IL1403) (Streptococcus lactis), this protein is Cell division protein SepF.